The following is a 275-amino-acid chain: NH(3)-dependent NAD(+) synthetase (275 aa).

An ATP-binding site is contributed by 46–53 (GISGGQDS). Asp-52 contributes to the Mg(2+) binding site. Arg-140 lines the deamido-NAD(+) pocket. Position 160 (Thr-160) interacts with ATP. Glu-165 serves as a coordination point for Mg(2+). The deamido-NAD(+) site is built by Lys-173 and Asp-180. Positions 189 and 211 each coordinate ATP. A deamido-NAD(+)-binding site is contributed by 260–261 (HK).

It belongs to the NAD synthetase family. As to quaternary structure, homodimer.

It carries out the reaction deamido-NAD(+) + NH4(+) + ATP = AMP + diphosphate + NAD(+) + H(+). The protein operates within cofactor biosynthesis; NAD(+) biosynthesis; NAD(+) from deamido-NAD(+) (ammonia route): step 1/1. In terms of biological role, catalyzes the ATP-dependent amidation of deamido-NAD to form NAD. Uses ammonia as a nitrogen source. In Salmonella agona (strain SL483), this protein is NH(3)-dependent NAD(+) synthetase.